Here is a 1018-residue protein sequence, read N- to C-terminus: Serine/threonine-protein phosphatase BSL2 (1018 aa).

Residues 1–75 (MDEDSSMVAD…AAAVVGQEQQ (75 aa)) are disordered. Over residues 41–57 (SPPPEGGSVPTPPPSDP) the composition is skewed to pro residues. Residues 63 to 75 (QQQAAAVVGQEQQ) show a composition bias toward low complexity. Kelch repeat units lie at residues 149-195 (TSAG…VATA), 253-301 (YLMA…TASA), 306-356 (LLLL…VFVN), 362-409 (SGGA…DAAG), and 430-479 (LIFI…RLPG). Residues 569-590 (DRDCGAEATPSGKPTFSLIKPD) form a disordered region. Position 627 is a phosphoserine (S627). The Mn(2+) site is built by D720, H722, D754, and N786. H787 acts as the Proton donor in catalysis. Positions 839 and 918 each coordinate Mn(2+). The residue at position 975 (S975) is a Phosphoserine. The span at 994–1011 (ANRPATPTRGRPQNSNDR) shows a compositional bias: polar residues. Positions 994 to 1018 (ANRPATPTRGRPQNSNDRGGSLAWM) are disordered.

Belongs to the PPP phosphatase family. BSU subfamily. Interacts with BSK8. Mn(2+) is required as a cofactor. Expressed throughout the plant, with a higher level in younger parts.

The protein resides in the cytoplasm. The protein localises to the cell membrane. It is found in the nucleus. The catalysed reaction is O-phospho-L-seryl-[protein] + H2O = L-seryl-[protein] + phosphate. It catalyses the reaction O-phospho-L-threonyl-[protein] + H2O = L-threonyl-[protein] + phosphate. In terms of biological role, phosphatase involved in elongation process, probably by acting as a regulator of brassinolide signaling. This is Serine/threonine-protein phosphatase BSL2 (BSL2) from Arabidopsis thaliana (Mouse-ear cress).